The sequence spans 285 residues: Probable endonuclease 4 (285 aa).

Residues His67, His107, Glu144, Asp178, His181, His215, Asp228, His230, and Glu260 each coordinate Zn(2+).

Belongs to the AP endonuclease 2 family. Requires Zn(2+) as cofactor.

The enzyme catalyses Endonucleolytic cleavage to 5'-phosphooligonucleotide end-products.. Functionally, endonuclease IV plays a role in DNA repair. It cleaves phosphodiester bonds at apurinic or apyrimidinic (AP) sites, generating a 3'-hydroxyl group and a 5'-terminal sugar phosphate. The protein is Probable endonuclease 4 of Chloroflexus aurantiacus (strain ATCC 29366 / DSM 635 / J-10-fl).